A 209-amino-acid chain; its full sequence is Ribosomal RNA large subunit methyltransferase E (209 aa).

S-adenosyl-L-methionine is bound by residues Gly-63, Trp-65, Asp-83, Asp-99, and Asp-124. The Proton acceptor role is filled by Lys-164.

It belongs to the class I-like SAM-binding methyltransferase superfamily. RNA methyltransferase RlmE family.

It localises to the cytoplasm. The enzyme catalyses uridine(2552) in 23S rRNA + S-adenosyl-L-methionine = 2'-O-methyluridine(2552) in 23S rRNA + S-adenosyl-L-homocysteine + H(+). Its function is as follows. Specifically methylates the uridine in position 2552 of 23S rRNA at the 2'-O position of the ribose in the fully assembled 50S ribosomal subunit. This Vibrio atlanticus (strain LGP32) (Vibrio splendidus (strain Mel32)) protein is Ribosomal RNA large subunit methyltransferase E.